Reading from the N-terminus, the 225-residue chain is Small ribosomal subunit protein eS1 (225 aa).

Belongs to the eukaryotic ribosomal protein eS1 family.

This Methanococcus maripaludis (strain DSM 14266 / JCM 13030 / NBRC 101832 / S2 / LL) protein is Small ribosomal subunit protein eS1.